A 219-amino-acid chain; its full sequence is Proteasome subunit beta (219 aa).

Residues 1–14 (MISGSEYHKEYMKG) constitute a propeptide, removed in mature form; by autocatalysis. The active-site Nucleophile is Thr-15.

Belongs to the peptidase T1B family. In terms of assembly, the 20S proteasome core is composed of 14 alpha and 14 beta subunits that assemble into four stacked heptameric rings, resulting in a barrel-shaped structure. The two inner rings, each composed of seven catalytic beta subunits, are sandwiched by two outer rings, each composed of seven alpha subunits. The catalytic chamber with the active sites is on the inside of the barrel. Has a gated structure, the ends of the cylinder being occluded by the N-termini of the alpha-subunits. Is capped at one or both ends by the proteasome regulatory ATPase, PAN.

It localises to the cytoplasm. It catalyses the reaction Cleavage of peptide bonds with very broad specificity.. With respect to regulation, the formation of the proteasomal ATPase PAN-20S proteasome complex, via the docking of the C-termini of PAN into the intersubunit pockets in the alpha-rings, triggers opening of the gate for substrate entry. Interconversion between the open-gate and close-gate conformations leads to a dynamic regulation of the 20S proteasome proteolysis activity. Its function is as follows. Component of the proteasome core, a large protease complex with broad specificity involved in protein degradation. The protein is Proteasome subunit beta of Methanococcus vannielii (strain ATCC 35089 / DSM 1224 / JCM 13029 / OCM 148 / SB).